The following is a 295-amino-acid chain: Small ribosomal subunit protein bS1 (295 aa).

S1 motif domains lie at 28–97 (GQLV…VSLR), 115–179 (GQTV…LSER), and 193–261 (GQLI…LSTK).

It belongs to the bacterial ribosomal protein bS1 family.

Binds mRNA. This is Small ribosomal subunit protein bS1 (rpsA) from Synechococcus elongatus (strain ATCC 33912 / PCC 7942 / FACHB-805) (Anacystis nidulans R2).